The following is a 111-amino-acid chain: Mitochondrial import inner membrane translocase subunit Tim10B (111 aa).

A Twin CX3C motif motif is present at residues 24–48 (CFNACARDYTTSTLTKDEGSCVSQC). 2 disulfides stabilise this stretch: Cys-24–Cys-48 and Cys-28–Cys-44. The interval 73 to 111 (KQGEQSPTEAIKSAKPEPAVPAPEATPVETTPVIEENKQ) is disordered. Low complexity predominate over residues 94–105 (APEATPVETTPV).

The protein belongs to the small Tim family. In terms of assembly, component of the TIM22 complex, whose core is composed of tim-22, associated with peripheral protein tin-9.2/tim-10b and the 70 kDa heterohexamer. In most cases, the 70 kDa complex is composed of TIMM9 and TIMM10.

It localises to the mitochondrion inner membrane. Functionally, component of the TIM22 complex, a complex that mediates the import and insertion of multi-pass transmembrane proteins into the mitochondrial inner membrane. The TIM22 complex forms a twin-pore translocase that uses the membrane potential as the external driving force. In the TIM22 complex, it may act as a docking point for the soluble 70 kDa complex that guides the target proteins in transit through the aqueous mitochondrial intermembrane space. The chain is Mitochondrial import inner membrane translocase subunit Tim10B (tin-9.2) from Caenorhabditis elegans.